The chain runs to 90 residues: MAQVLVIVRVLPEDVETPLDELRKRIAGALPEGYELKMWDEEPIAFGLKALRLAIIMPEQTEGGTETLENLISQVQGVSQVEVEYVNRLS.

Belongs to the EF-1-beta/EF-1-delta family.

Its function is as follows. Promotes the exchange of GDP for GTP in EF-1-alpha/GDP, thus allowing the regeneration of EF-1-alpha/GTP that could then be used to form the ternary complex EF-1-alpha/GTP/AAtRNA. The polypeptide is Elongation factor 1-beta (Desulfurococcus amylolyticus (strain DSM 18924 / JCM 16383 / VKM B-2413 / 1221n) (Desulfurococcus kamchatkensis)).